The chain runs to 510 residues: MFIESFRVESPHVRYGPMEIESEYRYDTTELVHEGKDGASRWVVRPKSVKYNFRTRTAVPKLGVMLVGWGGNNGSTLTAGVIANREGISWATKDKVQQANYYGSLTQASTIRVGSYNGEEIYAPFKSLLPMVNPDDIVFGGWDISNMNLADSMTRAKVLDIDLQKQLRPYMESMVPLPGIYDPDFIAANQGSRANSVIKGTKKEQVEQIIKDIREFKEKNKVDKIVVLWTANTERYSNVCAGLNDTMENLLASVDKNEAEVSPSTLYAIACVMEGVPFINGSPQNTFVPGLIDLAIKNNCLIGGDDFKSGQTKMKSVLVDFLVGAGIKPTSIVSYNHLGNNDGMNLSAPQAFRSKEISKSNVVDDMVSSNAILYEPGEHPDHVVVIKYVPYVGDSKRAMDEYTSEIFMGGKNTIVLHNTCEDSLLAAPIILDLVLLAELSTRIQLKAEGEDKFHSFHPVATILSYLTKAPLVPPGTPVVNALAKQRAMLENIMRACVGLAPENNMILEYK.

The NAD(+) site is built by glycine 70, glycine 71, asparagine 72, asparagine 73, aspartate 143, isoleucine 180, glutamine 190, arginine 193, threonine 230, alanine 231, asparagine 232, threonine 233, glycine 281, serine 282, aspartate 306, serine 309, asparagine 340, asparagine 341, aspartate 342, lysine 355, glycine 393, aspartate 394, aspartate 422, and serine 423.

This sequence belongs to the myo-inositol 1-phosphate synthase family. It depends on NAD(+) as a cofactor.

Its subcellular location is the cytoplasm. The protein resides in the cytosol. The protein localises to the nucleus. The enzyme catalyses D-glucose 6-phosphate = 1D-myo-inositol 3-phosphate. Its pathway is polyol metabolism; myo-inositol biosynthesis; myo-inositol from D-glucose 6-phosphate: step 1/2. Key enzyme in myo-inositol biosynthesis pathway that catalyzes the conversion of glucose 6-phosphate to 1-myo-inositol 1-phosphate in a NAD-dependent manner. This is Inositol-3-phosphate synthase from Zea mays (Maize).